The following is a 581-amino-acid chain: Caprolactamase subunit beta (581 aa).

The Zn(2+) site is built by D41, H99, D102, and H124.

This sequence belongs to the HyuB family. The caprolactamase is a heterotetramer composed of two alpha subunits (CapA) and two beta subunits (CapB). Requires Zn(2+) as cofactor.

With respect to regulation, activity is dependent on the presence of ATP and bicarbonate. The requirement for bicarbonate may be related to allosteric activation through conformational effects, but it is also conceivable that carboxyphosphate is formed and acts as a mediator in caprolactam activation, forming carboxy- or phospholactim. Component of a caprolactamase involved in the degradation of caprolactam, an industrial compound mainly used in the production of Nylon 6. Catalyzes the ATP-dependent hydrolysis of the caprolactam ring to form 6-aminocaproic acid (6-ACA). The beta subunit is responsible for hydrolytic lactam ring opening. The enzyme cannot use 5-oxoproline. This is Caprolactamase subunit beta from Pseudomonas jessenii.